The sequence spans 158 residues: Hypoxanthine DNA glycosylase (158 aa).

The active site involves N39.

Belongs to the uracil-DNA glycosylase (UDG) superfamily. Type 6 (HDG) family.

In terms of biological role, excises hypoxanthine, a deamination product of adenine, from double-stranded DNA. Acts on double-stranded DNA containing G/I, T/I, A/I and C/I base pairs, but not on single-stranded inosine-containing DNA. Also has minor xanthine DNA glycosylase activity. Lacks any detectable uracil-DNA glycosylase activity. The protein is Hypoxanthine DNA glycosylase of Methanosarcina barkeri (strain Fusaro / DSM 804).